Consider the following 348-residue polypeptide: Myricetin O-methyltransferase (348 aa).

An N-acetylmethionine modification is found at methionine 1. S-adenosyl-L-methionine is bound by residues glycine 189, aspartate 212, aspartate 232, methionine 233, and lysine 246. The active-site Proton acceptor is histidine 250.

The N-terminus is blocked.

It carries out the reaction S-adenosyl-L-methionine + a 3'-hydroxyflavonoid = S-adenosyl-L-homocysteine + a 3'-methoxyflavonoid.. The catalysed reaction is S-adenosyl-L-methionine + a 5'-hydroxy-3'-methoxyflavonoid = S-adenosyl-L-homocysteine + a 3',5'-dimethoxyflavonoid.. Methylates myricetin and dihydromyricetin at 2 sites. Inactive towards 16-hydroxytabersonine, the phenylpropanoids 5-hydroxyferulate, caffeate and their CoA-esters, flavones and flavanones possessing 2 or 3 B-ring hydroxyl groups. This is Myricetin O-methyltransferase from Catharanthus roseus (Madagascar periwinkle).